The primary structure comprises 129 residues: Small ribosomal subunit protein uS11 (129 aa).

Belongs to the universal ribosomal protein uS11 family. As to quaternary structure, part of the 30S ribosomal subunit. Interacts with proteins S7 and S18. Binds to IF-3.

Its function is as follows. Located on the platform of the 30S subunit, it bridges several disparate RNA helices of the 16S rRNA. Forms part of the Shine-Dalgarno cleft in the 70S ribosome. The sequence is that of Small ribosomal subunit protein uS11 from Brucella abortus (strain S19).